The chain runs to 682 residues: K(+)-insensitive pyrophosphate-energized proton pump 2 (682 aa).

5 helical membrane passes run 1 to 21 (MELFPIIPAGGILALLVALYM), 56 to 76 (TIAGLALIVAVLLALLTRQYH), 78 to 98 (AVAFITGAFASALSGYIGMYV), 130 to 150 (LAVTALSLLGVTSLFYAFGGA), and 160 to 180 (IVGFGFGASFVALFAQLSGGI). Residue Lys183 coordinates substrate. Mg(2+) contacts are provided by Asp186, Asp190, and Asp216. 7 helical membrane-spanning segments follow: residues 237-257 (IGAMILGIALVPFFGVKGIVF), 258-278 (PLVARAAGIIASIIGMFFVRA), 291-311 (GYIVTSILAIIFLYPISRYML), 318-338 (FIYFYGAGIIGIVLSFIFVLI), 353-373 (IARASITGPATNIISGVAVGF), 375-395 (STALPVVFISLAILGAYWLGL), and 404-424 (LYGTAVATMGMLSTAAYILAM). Asp432 contacts Mg(2+). 4 consecutive transmembrane segments (helical) span residues 468 to 488 (YAIGSAALATFLLFSAYIDEV), 506 to 526 (EVFVGAFIAAMMVLLFSSTAI), 574 to 594 (MVLPGLIVVITPIIVGLVLKA), and 595 to 615 (EAAAAFLMVGTITGVIVALFL). Asp623, Asp649, and Asp653 together coordinate Ca(2+). Lys656 contacts substrate. The chain crosses the membrane as a helical span at residues 662–682 (SLHVLVKLISTITLVLAGLFI).

It belongs to the H(+)-translocating pyrophosphatase (TC 3.A.10) family. K(+)-insensitive subfamily. As to quaternary structure, homodimer. The cofactor is Mg(2+).

The protein resides in the cell membrane. The catalysed reaction is diphosphate + H2O + H(+)(in) = 2 phosphate + 2 H(+)(out). Its function is as follows. Proton pump that utilizes the energy of pyrophosphate hydrolysis as the driving force for proton movement across the membrane. Generates a proton motive force. This is K(+)-insensitive pyrophosphate-energized proton pump 2 from Moorella thermoacetica (strain ATCC 39073 / JCM 9320).